A 183-amino-acid chain; its full sequence is ATP-dependent protease subunit HslV (183 aa).

Thr-7 is an active-site residue. Na(+) is bound by residues Gly-162, Cys-165, and Thr-168.

This sequence belongs to the peptidase T1B family. HslV subfamily. In terms of assembly, a double ring-shaped homohexamer of HslV is capped on each side by a ring-shaped HslU homohexamer. The assembly of the HslU/HslV complex is dependent on binding of ATP.

Its subcellular location is the cytoplasm. It catalyses the reaction ATP-dependent cleavage of peptide bonds with broad specificity.. With respect to regulation, allosterically activated by HslU binding. Functionally, protease subunit of a proteasome-like degradation complex believed to be a general protein degrading machinery. This Chromobacterium violaceum (strain ATCC 12472 / DSM 30191 / JCM 1249 / CCUG 213 / NBRC 12614 / NCIMB 9131 / NCTC 9757 / MK) protein is ATP-dependent protease subunit HslV.